Here is a 553-residue protein sequence, read N- to C-terminus: Solute carrier family 2, facilitated glucose transporter member 10 (553 aa).

Residues 1 to 15 (MGLRSTTLVLAATSS) lie on the Cytoplasmic side of the membrane. The helical transmembrane segment at 16–36 (LLGGLIFGYELGIISGALLML) threads the bilayer. At 37-48 (KTVFQLTCFEQE) the chain is on the extracellular side. Residues 49–69 (ALVSAVLFGALLASLIGGFII) form a helical membrane-spanning segment. The Cytoplasmic portion of the chain corresponds to 70–82 (DRSGRRTSIMGSN). A helical transmembrane segment spans residues 83 to 103 (LVVLAGSIILIATSSFWWLVV). Residues 104–105 (GR) lie on the Extracellular side of the membrane. A helical transmembrane segment spans residues 106–126 (VTVGFAISISSMACCIYVSEI). Over 127–132 (VRPHQR) the chain is Cytoplasmic. Residues 133–153 (GTLVSLYETGITVGILISYAM) form a helical membrane-spanning segment. The Extracellular portion of the chain corresponds to 154-165 (NYFLSAVNDGWK). Residues 166–186 (YMFGLAIIPAAFQFIVILFLP) traverse the membrane as a helical segment. Topologically, residues 187–240 (SKPHTLNFWEQDSDNGFIELEEAGESGEFKPDTYDKQYTFLDLFRSKDNMRTRT) are cytoplasmic. The helical transmembrane segment at 241–261 (LLGLGLVLFQQFTGQPNVLYY) threads the bilayer. 250-251 (QQ) contacts D-glucose. Topologically, residues 262–277 (ASTIFRSVGFQSNSSA) are extracellular. The N-linked (GlcNAc...) asparagine glycan is linked to Asn274. The chain crosses the membrane as a helical span at residues 278 to 298 (VLASVGLGVVKVASTLIAICF). Topologically, residues 299-305 (ADKAGRR) are cytoplasmic. Residues 306–326 (ILLLAGCIVMTIAISGIGIVS) traverse the membrane as a helical segment. Residues 327–413 (FMVELDSHRD…PPAGPDSNYA (87 aa)) are Extracellular-facing. Asn344, Asn351, and Asn400 each carry an N-linked (GlcNAc...) asparagine glycan. The chain crosses the membrane as a helical span at residues 414–434 (ILNWITLLSMMAFVSAFSIGF). The Cytoplasmic segment spans residues 435 to 462 (GPMTWLVLSEIYPADIRGRAFAFCNSFN). D-glucose is bound at residue Trp439. The chain crosses the membrane as a helical span at residues 463–482 (WAANLLITLTFLEVIGSIGL). Gly483 is a topological domain (extracellular). A helical membrane pass occupies residues 484-504 (WTFLLYGGVGLLAIAFIYFFI). Residues 505–553 (PETKGQSLEEIDQQLSSKRISKRRETSKGVRKRPSTGPPYQRVGKSNWT) lie on the Cytoplasmic side of the membrane. The segment at 522–553 (KRISKRRETSKGVRKRPSTGPPYQRVGKSNWT) is disordered.

This sequence belongs to the major facilitator superfamily. Sugar transporter (TC 2.A.1.1) family. Glucose transporter subfamily.

The protein localises to the endomembrane system. It is found in the cytoplasm. Its subcellular location is the perinuclear region. The enzyme catalyses D-glucose(out) = D-glucose(in). Its function is as follows. Facilitative glucose transporter required for the development of the cardiovascular system. In Xenopus laevis (African clawed frog), this protein is Solute carrier family 2, facilitated glucose transporter member 10.